We begin with the raw amino-acid sequence, 637 residues long: Dihydrolipoyllysine-residue acetyltransferase component of pyruvate dehydrogenase complex, mitochondrial (637 aa).

Residues 1 to 85 constitute a mitochondrion transit peptide; the sequence is MWRVCVRRAQ…LLGSPGRRSY (85 aa). Residues 80 to 100 are disordered; the sequence is PGRRSYSLPPHQKVPLPSLSP. The 77-residue stretch at 90–166 folds into the Lipoyl-binding 1 domain; sequence HQKVPLPSLS…PIGSIICITV (77 aa). S99 is subject to Phosphoserine. Residue K131 is modified to N6-lipoyllysine. Disordered regions lie at residues 189 to 219 and 307 to 340; these read QAAA…PPHM and LKPQ…PAGP. A compositionally biased stretch (low complexity) spans 201–211; the sequence is AAPTAPSAKAP. Positions 218–287 constitute a Lipoyl-binding 2 domain; the sequence is HMQVSAVGEQ…PLGAPLCIIV (70 aa). Positions 310–321 are enriched in pro residues; the sequence is QAPPPVPPPVAA. Residues 322–333 show a composition bias toward low complexity; the sequence is APPTAQPLAPTP. The Peripheral subunit-binding (PSBD) domain maps to 345 to 382; it reads FVSPLAKKLAAERGIDLTQVKGTGPEGRIIKKDIDSFV. R451 contacts CoA. K456 bears the N6-acetyllysine mark. The residue at position 463 (K463) is an N6-succinyllysine. S465 is a binding site for CoA. N6-succinyllysine is present on K537. CoA-binding residues include S556, N557, and G581. Residues H610 and D614 contribute to the active site.

This sequence belongs to the 2-oxoacid dehydrogenase family. As to quaternary structure, part of the pyruvate dehydrogenase complex (PDHc) that is a multi-enzyme complex composed of multiple copies of three enzymes, pyruvate dehydrogenase (subunits PDH1A and PDHB, E1 component), dihydrolipoamide acetyltransferase (DLAT, E2 component), and dihydrolipoamide dehydrogenase (DLD, E3 component) to which is added an additional protein the E3-binding protein (PDHX, E3BP). In terms of structural architecture, the E2 and E3BP components assemble into a 60meric central core with icosahedral symmetry. The central core is decorated with E1 and E3 proteins. Currently, two alternative models for the E2:E3BP stoichiometry are considered as being either 48:12 (E2(48)-E3BP(12)) or 40:20 (E2(40)-E3BP(20)). Interacts with PDK2 and PDK3. Interacts with SIRT4. Interacts with PDHB. The cofactor is (R)-lipoate. Delipoylated at Lys-131 by SIRT4, delipoylation decreases the PHD complex activity. As to expression, detected at higher levels in cauda epididymal spermatazoa than in caput epididymal spermatazoa (at protein level).

The protein resides in the mitochondrion matrix. The enzyme catalyses N(6)-[(R)-dihydrolipoyl]-L-lysyl-[protein] + acetyl-CoA = N(6)-[(R)-S(8)-acetyldihydrolipoyl]-L-lysyl-[protein] + CoA. In terms of biological role, as part of the pyruvate dehydrogenase complex, catalyzes the transfers of an acetyl group to a lipoic acid moiety. The pyruvate dehydrogenase complex, catalyzes the overall conversion of pyruvate to acetyl-CoA and CO(2), and thereby links cytoplasmic glycolysis and the mitochondrial tricarboxylic acid (TCA) cycle. In Mesocricetus auratus (Golden hamster), this protein is Dihydrolipoyllysine-residue acetyltransferase component of pyruvate dehydrogenase complex, mitochondrial.